Consider the following 415-residue polypeptide: G-protein coupled receptor daf-38 (415 aa).

Low complexity predominate over residues 1–19 (MLLPSNLTTSTLMTSSSES). Residues 1 to 25 (MLLPSNLTTSTLMTSSSESYDADNP) form a disordered region. Over 1–35 (MLLPSNLTTSTLMTSSSESYDADNPGLPPEPILSD) the chain is Extracellular. A helical membrane pass occupies residues 36-56 (YVEMFTLVLNFIVGAPLNLAA). Residues 57-75 (YTQLSERPTSTRLDLLKRS) are Cytoplasmic-facing. Residues 76–96 (LNYSDLLVLFIYVPSRACWLL) form a helical membrane-spanning segment. The Extracellular portion of the chain corresponds to 97-108 (TYDWRGGDALCK). Cys-107 and Cys-187 are joined by a disulfide. Residues 109–129 (IVKMFHTFAFQSSSNVIVCIA) form a helical membrane-spanning segment. The Cytoplasmic segment spans residues 130 to 152 (VDRLLSVLSPSHHSPNKALKRTK). Residues 153-173 (MMLIVAWIVALVISCPQLFIW) form a helical membrane-spanning segment. Over 174 to 222 (KAYLALPEYNWSQCLQIWEIARMEKFNKPQVVPEFDAEFWYSILHISLV) the chain is Extracellular. A helical membrane pass occupies residues 223 to 243 (FWIPCIIIMLSYIIVISWVWI). At 244-345 (NSRPSIRHTS…NLNRSRALRV (102 aa)) the chain is on the cytoplasmic side. A helical transmembrane segment spans residues 346–366 (SLLLVVAYIICWLPYNLISLI). Over 367–382 (QFLDRDFFSSYLKHVH) the chain is Extracellular. The chain crosses the membrane as a helical span at residues 383–403 (FCQQLIIFNSVVNPWLYGFFG). At 404 to 415 (PRRPSTTGAGRH) the chain is on the cytoplasmic side.

It belongs to the G-protein coupled receptor 1 family. In terms of assembly, heterodimer; with daf-37. Expressed in the ASI and ASK chemosensory neurons and in the IL-2 interneurons, but weakly expressed in other head neurons in hermaphrodites.

It localises to the cell membrane. In terms of biological role, G-protein coupled receptor (GPCR) that forms a heterodimer with daf-37 to control dauer formation and behavior. Required for the response to dauer inducing pheromones such as the ascarosides ascr#2, ascr#3 and ascr#5. The chain is G-protein coupled receptor daf-38 from Caenorhabditis elegans.